The sequence spans 395 residues: Tubulin-like protein CetZ1 (395 aa).

Residues 10–14 (QAGGK), 110–112 (GTG), Glu-142, Asn-169, and Asn-187 contribute to the GTP site.

This sequence belongs to the CetZ family.

Its subcellular location is the cytoplasm. Functionally, involved in cell shape control. Essential for the development of a rod-shaped cell type required for efficient swimming. This Haloferax volcanii (strain ATCC 29605 / DSM 3757 / JCM 8879 / NBRC 14742 / NCIMB 2012 / VKM B-1768 / DS2) (Halobacterium volcanii) protein is Tubulin-like protein CetZ1.